Here is a 321-residue protein sequence, read N- to C-terminus: Phosphate acyltransferase (321 aa).

The protein belongs to the PlsX family. As to quaternary structure, homodimer. Probably interacts with PlsY.

It is found in the cytoplasm. The catalysed reaction is a fatty acyl-[ACP] + phosphate = an acyl phosphate + holo-[ACP]. The protein operates within lipid metabolism; phospholipid metabolism. In terms of biological role, catalyzes the reversible formation of acyl-phosphate (acyl-PO(4)) from acyl-[acyl-carrier-protein] (acyl-ACP). This enzyme utilizes acyl-ACP as fatty acyl donor, but not acyl-CoA. This chain is Phosphate acyltransferase, found in Chlamydia trachomatis serovar L2 (strain ATCC VR-902B / DSM 19102 / 434/Bu).